Consider the following 446-residue polypeptide: UDP-N-acetylmuramoylalanine--D-glutamate ligase (446 aa).

115-121 (GTNGKTT) contacts ATP.

Belongs to the MurCDEF family.

It localises to the cytoplasm. The catalysed reaction is UDP-N-acetyl-alpha-D-muramoyl-L-alanine + D-glutamate + ATP = UDP-N-acetyl-alpha-D-muramoyl-L-alanyl-D-glutamate + ADP + phosphate + H(+). It functions in the pathway cell wall biogenesis; peptidoglycan biosynthesis. Its function is as follows. Cell wall formation. Catalyzes the addition of glutamate to the nucleotide precursor UDP-N-acetylmuramoyl-L-alanine (UMA). This chain is UDP-N-acetylmuramoylalanine--D-glutamate ligase, found in Trichlorobacter lovleyi (strain ATCC BAA-1151 / DSM 17278 / SZ) (Geobacter lovleyi).